Here is an 89-residue protein sequence, read N- to C-terminus: Large ribosomal subunit protein bL27 (89 aa).

Residues 1–22 are disordered; that stretch reads MAHKKAGGSSRNGRDSAGRRLG.

It belongs to the bacterial ribosomal protein bL27 family.

The chain is Large ribosomal subunit protein bL27 from Sphingopyxis alaskensis (strain DSM 13593 / LMG 18877 / RB2256) (Sphingomonas alaskensis).